The following is a 49-amino-acid chain: MKLLNQMELLLSTCKNRYVLTREVAEYAKKTPSPNAVILAIWLMARKTK.

Belongs to the RNA polymerase subunit omega family.

It is found in the plastid. Its subcellular location is the chloroplast. It carries out the reaction RNA(n) + a ribonucleoside 5'-triphosphate = RNA(n+1) + diphosphate. May be involved in RNA polymerase activity. The chain is Putative DNA-directed RNA polymerase subunit omega (rpoZ) from Cyanidioschyzon merolae (strain NIES-3377 / 10D) (Unicellular red alga).